Here is a 397-residue protein sequence, read N- to C-terminus: Elongation factor Tu (397 aa).

Residues 10 to 207 (KPHVNIGTIG…ACDSYIEEPE (198 aa)) enclose the tr-type G domain. A G1 region spans residues 19–26 (GHIDHGKT). 19–26 (GHIDHGKT) is a binding site for GTP. Thr26 contributes to the Mg(2+) binding site. Residues 60–64 (GITIA) form a G2 region. The segment at 81-84 (DCPG) is G3. GTP contacts are provided by residues 81–85 (DCPGH) and 136–139 (NKCD). The G4 stretch occupies residues 136–139 (NKCD). Positions 174-176 (SAL) are G5.

The protein belongs to the TRAFAC class translation factor GTPase superfamily. Classic translation factor GTPase family. EF-Tu/EF-1A subfamily. Monomer.

It localises to the cytoplasm. It catalyses the reaction GTP + H2O = GDP + phosphate + H(+). Its function is as follows. GTP hydrolase that promotes the GTP-dependent binding of aminoacyl-tRNA to the A-site of ribosomes during protein biosynthesis. This Maridesulfovibrio salexigens (strain ATCC 14822 / DSM 2638 / NCIMB 8403 / VKM B-1763) (Desulfovibrio salexigens) protein is Elongation factor Tu.